The primary structure comprises 460 residues: Endoglucanase C (460 aa).

The N-terminal stretch at 1–32 (MIKGSSLKRFKSLVMAAIFSVSIISTAIASSA) is a signal peptide. Glutamate 99 functions as the Proton donor in the catalytic mechanism. The active-site Nucleophile is aspartate 155. Residues 400-460 (KPDLKGDVNN…FAQLKVKLLN (61 aa)) form the Dockerin domain.

This sequence belongs to the glycosyl hydrolase 8 (cellulase D) family. In terms of assembly, monomer. Post-translationally, there are two forms of the cellulase. The shorter form lacks probably the C-terminal reiterated domains.

The enzyme catalyses Endohydrolysis of (1-&gt;4)-beta-D-glucosidic linkages in cellulose, lichenin and cereal beta-D-glucans.. It participates in glycan metabolism; cellulose degradation. Functionally, the biological conversion of cellulose to glucose generally requires three types of hydrolytic enzymes: (1) Endoglucanases which cut internal beta-1,4-glucosidic bonds; (2) Exocellobiohydrolases that cut the disaccharide cellobiose from the non-reducing end of the cellulose polymer chain; (3) Beta-1,4-glucosidases which hydrolyze the cellobiose and other short cello-oligosaccharides to glucose. In Ruminiclostridium cellulolyticum (strain ATCC 35319 / DSM 5812 / JCM 6584 / H10) (Clostridium cellulolyticum), this protein is Endoglucanase C (celCCC).